A 406-amino-acid polypeptide reads, in one-letter code: Argininosuccinate synthase (406 aa).

ATP is bound by residues 11 to 19 and alanine 38; that span reads AYSGGLDTS. L-citrulline contacts are provided by tyrosine 91 and serine 96. An ATP-binding site is contributed by glycine 121. Positions 123, 127, and 128 each coordinate L-aspartate. Position 127 (asparagine 127) interacts with L-citrulline. L-citrulline-binding residues include arginine 131, serine 181, serine 190, glutamate 266, and tyrosine 278.

Belongs to the argininosuccinate synthase family. Type 1 subfamily. Homotetramer.

The protein resides in the cytoplasm. It carries out the reaction L-citrulline + L-aspartate + ATP = 2-(N(omega)-L-arginino)succinate + AMP + diphosphate + H(+). The protein operates within amino-acid biosynthesis; L-arginine biosynthesis; L-arginine from L-ornithine and carbamoyl phosphate: step 2/3. In Campylobacter jejuni subsp. doylei (strain ATCC BAA-1458 / RM4099 / 269.97), this protein is Argininosuccinate synthase.